Consider the following 60-residue polypeptide: Potassium channel toxin alpha-KTx 15.8 (60 aa).

The N-terminal stretch at 1-22 (MKFSSIILLTLLICSMSIFGNC) is a signal peptide. Pyrrolidone carboxylic acid is present on Q23. Disulfide bonds link C30–C50, C35–C55, and C39–C57.

The protein belongs to the short scorpion toxin superfamily. Potassium channel inhibitor family. Alpha-KTx 15 subfamily. In terms of tissue distribution, expressed by the venom gland.

It is found in the secreted. Functionally, blocker of A-type voltage-gated potassium channels of cerebellar granular cells. May also inhibit Kv4/KCND when coexpressed with DPP6 or DPP10. The occlusion of the outer entry of the K(+) conducting pore is partially reversible and affects both open and closed channels. It shares the same target in rat brain than BmTX3 (AC Q8I0L5) and AmmTX3 (AC P60208). Also shows a weak inhibition on Kv1.2/KCNA2 and Kv1.3/KCNA3 voltage-gated potassium channels. The protein is Potassium channel toxin alpha-KTx 15.8 of Olivierus martensii (Manchurian scorpion).